Consider the following 57-residue polypeptide: UPF0391 membrane protein azo1765 (57 aa).

A run of 2 helical transmembrane segments spans residues 1 to 21 (MIKW…FGFT) and 33 to 53 (VLFF…VGLG).

This sequence belongs to the UPF0391 family.

It localises to the cell membrane. The protein is UPF0391 membrane protein azo1765 of Azoarcus sp. (strain BH72).